The sequence spans 236 residues: Orotidine 5'-phosphate decarboxylase (236 aa).

Residues Asp-16, Lys-38, 65 to 74 (DLKLHDIGNT), Thr-123, Arg-184, Gln-193, Gly-213, and Arg-214 each bind substrate. The Proton donor role is filled by Lys-67.

This sequence belongs to the OMP decarboxylase family. Type 1 subfamily. Homodimer.

It carries out the reaction orotidine 5'-phosphate + H(+) = UMP + CO2. Its pathway is pyrimidine metabolism; UMP biosynthesis via de novo pathway; UMP from orotate: step 2/2. In terms of biological role, catalyzes the decarboxylation of orotidine 5'-monophosphate (OMP) to uridine 5'-monophosphate (UMP). The chain is Orotidine 5'-phosphate decarboxylase from Methylobacterium nodulans (strain LMG 21967 / CNCM I-2342 / ORS 2060).